A 194-amino-acid polypeptide reads, in one-letter code: Orotate phosphoribosyltransferase (194 aa).

5-phospho-alpha-D-ribose 1-diphosphate contacts are provided by residues Arg-102, Lys-103, Lys-106, His-108, and 129 to 137; that span reads EDVVTTGGS. Thr-133 and Arg-161 together coordinate orotate.

This sequence belongs to the purine/pyrimidine phosphoribosyltransferase family. PyrE subfamily. In terms of assembly, homodimer. Mg(2+) serves as cofactor.

The enzyme catalyses orotidine 5'-phosphate + diphosphate = orotate + 5-phospho-alpha-D-ribose 1-diphosphate. It participates in pyrimidine metabolism; UMP biosynthesis via de novo pathway; UMP from orotate: step 1/2. Catalyzes the transfer of a ribosyl phosphate group from 5-phosphoribose 1-diphosphate to orotate, leading to the formation of orotidine monophosphate (OMP). This chain is Orotate phosphoribosyltransferase, found in Prochlorococcus marinus (strain MIT 9211).